The following is a 641-amino-acid chain: 1-deoxy-D-xylulose-5-phosphate synthase (641 aa).

Thiamine diphosphate contacts are provided by residues His-80 and 121 to 123 (GHS). Position 152 (Asp-152) interacts with Mg(2+). Thiamine diphosphate-binding positions include 153–154 (GS), Asn-181, Tyr-290, and Glu-372. Asn-181 serves as a coordination point for Mg(2+).

It belongs to the transketolase family. DXPS subfamily. Homodimer. Requires Mg(2+) as cofactor. The cofactor is thiamine diphosphate.

It catalyses the reaction D-glyceraldehyde 3-phosphate + pyruvate + H(+) = 1-deoxy-D-xylulose 5-phosphate + CO2. Its pathway is metabolic intermediate biosynthesis; 1-deoxy-D-xylulose 5-phosphate biosynthesis; 1-deoxy-D-xylulose 5-phosphate from D-glyceraldehyde 3-phosphate and pyruvate: step 1/1. In terms of biological role, catalyzes the acyloin condensation reaction between C atoms 2 and 3 of pyruvate and glyceraldehyde 3-phosphate to yield 1-deoxy-D-xylulose-5-phosphate (DXP). The polypeptide is 1-deoxy-D-xylulose-5-phosphate synthase (Rhodobacter capsulatus (Rhodopseudomonas capsulata)).